The primary structure comprises 176 residues: Inorganic pyrophosphatase (176 aa).

The substrate site is built by K30, R44, and Y56. 3 residues coordinate Mg(2+): D66, D71, and D103. Y142 is a substrate binding site.

It belongs to the PPase family. As to quaternary structure, homohexamer. The cofactor is Mg(2+).

The protein resides in the cytoplasm. It catalyses the reaction diphosphate + H2O = 2 phosphate + H(+). Functionally, catalyzes the hydrolysis of inorganic pyrophosphate (PPi) forming two phosphate ions. The protein is Inorganic pyrophosphatase of Brucella melitensis biotype 1 (strain ATCC 23456 / CCUG 17765 / NCTC 10094 / 16M).